Here is a 198-residue protein sequence, read N- to C-terminus: Na(+)-translocating NADH-quinone reductase subunit E (198 aa).

Transmembrane regions (helical) follow at residues 11-31, 35-55, 77-97, 110-130, 140-160, and 176-196; these read SIFI…FLAV, VSTA…AVPA, FLNF…LEMI, GIFL…SFMV, VVYG…LAGI, and LGIT…FSGI.

This sequence belongs to the NqrDE/RnfAE family. Composed of six subunits; NqrA, NqrB, NqrC, NqrD, NqrE and NqrF.

The protein resides in the cell inner membrane. The catalysed reaction is a ubiquinone + n Na(+)(in) + NADH + H(+) = a ubiquinol + n Na(+)(out) + NAD(+). Its function is as follows. NQR complex catalyzes the reduction of ubiquinone-1 to ubiquinol by two successive reactions, coupled with the transport of Na(+) ions from the cytoplasm to the periplasm. NqrA to NqrE are probably involved in the second step, the conversion of ubisemiquinone to ubiquinol. The sequence is that of Na(+)-translocating NADH-quinone reductase subunit E from Glaesserella parasuis serovar 5 (strain SH0165) (Haemophilus parasuis).